The chain runs to 687 residues: Glycine--tRNA ligase beta subunit (687 aa).

Belongs to the class-II aminoacyl-tRNA synthetase family. As to quaternary structure, tetramer of two alpha and two beta subunits.

Its subcellular location is the cytoplasm. It carries out the reaction tRNA(Gly) + glycine + ATP = glycyl-tRNA(Gly) + AMP + diphosphate. The chain is Glycine--tRNA ligase beta subunit from Neisseria meningitidis serogroup C / serotype 2a (strain ATCC 700532 / DSM 15464 / FAM18).